A 33-amino-acid polypeptide reads, in one-letter code: Beta-theraphotoxin-Cm1b (33 aa).

3 cysteine pairs are disulfide-bonded: Cys-2-Cys-17, Cys-9-Cys-22, and Cys-16-Cys-29. Leu-33 carries the leucine amide modification.

The protein belongs to the neurotoxin 10 (Hwtx-1) family. 04 (CcoTx1) subfamily. Expressed by the venom gland.

It localises to the secreted. Inhibits several voltage-gated sodium channels and only one voltage-gated calcium channel (Cav2.2/CACNA1B (IC(50)=1.1 uM) and Nav1.2/SCN2A (IC(50)=3.7-80 nM), Nav1.3/SCN3A (IC(50)=88-5570 nM), Nav1.1/SCN1A (IC(50)=170-407 nM), Nav1.7/SCN9A (IC(50)=95.5-230 nM), Nav1.6/SCN6A (IC(50)=49.9-3990 nM), Nav1.4/SCN4A (IC(50)=113-400 nM or &gt;10 uM), Nav1.5/SCN5A (IC(50)=1524-1634 nM or &gt;10 uM)). The toxin acts by shifting the voltage dependence of channel activation to more depolarized potentials and by blocking the inward component of the sodium current. It shows moderate affinity for lipid bilayers without cholesterol and high affinity for lipid bilayers containing cholesterol. In vivo, this toxin causes general ataxia, lack of response to stimuli, and semiparalysis. After a few minutes, the mice are unable to stand, and breathing is reduced in rhythm and intensity. Symptoms gradually increase with progressive slowing of breathing and flaccid paralysis; death occurred within 10 to 20 minutes post injection. Animals remain totally flaccid, and no symptoms of excitatory neurotoxicity are observed. This Ceratogyrus marshalli (Straighthorned baboon tarantula) protein is Beta-theraphotoxin-Cm1b.